The following is a 514-amino-acid chain: Retron Vc95 probable ATPase (514 aa).

The ATP-binding signature appears at 92-99 (GNNGSGKS).

Its function is as follows. Probable ATPase component of antiviral defense system retron Vc95, composed of a non-coding RNA (ncRNA), a reverse transcriptase (RT), this protein and a putative HNH endonuclease. Expression of retron Vc95 confers protection against bacteriophages T2, T4 and T6. At multiplicity of infection (MOI) of 0.02 cultures slow growth when infected with T4 but do not collapse, at MOI 2 cultures enter growth stasis. The polypeptide is Retron Vc95 probable ATPase (Vibrio cholerae serotype O1 biovar El Tor).